A 193-amino-acid chain; its full sequence is NADH-quinone oxidoreductase subunit B (193 aa).

[4Fe-4S] cluster is bound by residues Cys-72, Cys-73, Cys-137, and Cys-167.

Belongs to the complex I 20 kDa subunit family. NDH-1 is composed of 14 different subunits. Subunits NuoB, C, D, E, F, and G constitute the peripheral sector of the complex. Requires [4Fe-4S] cluster as cofactor.

It is found in the cell inner membrane. The catalysed reaction is a quinone + NADH + 5 H(+)(in) = a quinol + NAD(+) + 4 H(+)(out). Functionally, NDH-1 shuttles electrons from NADH, via FMN and iron-sulfur (Fe-S) centers, to quinones in the respiratory chain. The immediate electron acceptor for the enzyme in this species is believed to be ubiquinone. Couples the redox reaction to proton translocation (for every two electrons transferred, four hydrogen ions are translocated across the cytoplasmic membrane), and thus conserves the redox energy in a proton gradient. The protein is NADH-quinone oxidoreductase subunit B of Bradyrhizobium sp. (strain ORS 278).